Consider the following 126-residue polypeptide: Large ribosomal subunit protein bL20c (126 aa).

Belongs to the bacterial ribosomal protein bL20 family.

It is found in the plastid. It localises to the chloroplast. Binds directly to 23S ribosomal RNA and is necessary for the in vitro assembly process of the 50S ribosomal subunit. It is not involved in the protein synthesizing functions of that subunit. This chain is Large ribosomal subunit protein bL20c, found in Lactuca sativa (Garden lettuce).